We begin with the raw amino-acid sequence, 536 residues long: Thiamine transport system permease protein ThiP (536 aa).

12 helical membrane-spanning segments follow: residues 12–32 (WLIP…AAFL), 58–78 (FSFW…IFLA), 95–115 (LCAM…LSVY), 134–154 (FSPY…LPMA), 199–219 (VAAL…SLGG), 240–260 (PARA…LVLL), 293–313 (VLIV…IVDG), 334–354 (SLRI…MLLW), 374–394 (SGML…FLLL), 404–424 (ADGI…LKVL), 463–483 (AQAL…VALF), and 506–526 (DGAV…TVIE). One can recognise an ABC transmembrane type-1 1 domain in the interval 56 to 261 (VRFSFWQAFL…VCCLGLVLLS (206 aa)). Residues 331 to 525 (LWTSLRIALA…LLCFLLFTVI (195 aa)) form the ABC transmembrane type-1 2 domain.

This sequence belongs to the binding-protein-dependent transport system permease family. CysTW subfamily. As to quaternary structure, the complex is composed of two ATP-binding proteins (ThiQ), two transmembrane proteins (ThiP) and a solute-binding protein (ThiB).

It is found in the cell inner membrane. With respect to regulation, transport is inhibited by the sulfhydryl-specific modifier N-ethylmaleimide. Its function is as follows. Part of the ABC transporter complex ThiBPQ involved in thiamine import. Probably responsible for the translocation of the substrate across the membrane. This is Thiamine transport system permease protein ThiP (thiP) from Escherichia coli (strain K12).